A 669-amino-acid chain; its full sequence is Protein ENTREP3 (669 aa).

3 consecutive transmembrane segments (helical) span residues 34–54 (LLTL…FSMV), 67–87 (SCPS…IVSW), and 91–111 (FTLV…LSMA). An N-linked (GlcNAc...) asparagine glycan is attached at Asn-160. Residues 174–194 (LFSVCGLTICAAIICTLSAIV) form a helical membrane-spanning segment. Phosphoserine is present on residues Ser-359 and Ser-390. 3 disordered regions span residues 387 to 420 (FEDS…PTAA), 445 to 502 (PRGG…TTSS), and 550 to 571 (RSAE…SGPT). Positions 399-408 (AARSYSCSAP) are enriched in low complexity. Ser-494 is subject to Phosphoserine. Ser-575 is modified (phosphoserine). The interval 597–624 (RRSPDPTGTGAHGYKQVRRSPWGRPGRE) is disordered.

It belongs to the ENTREP family. In terms of assembly, may interact with WWOX.

It is found in the membrane. The protein is Protein ENTREP3 of Mus musculus (Mouse).